The primary structure comprises 636 residues: Translation factor GUF1, mitochondrial (636 aa).

In terms of domain architecture, tr-type G spans 35-218 (SNYRNFSIVA…AIIRDIPGPR (184 aa)). GTP-binding positions include 44 to 51 (AHVDHGKS), 111 to 115 (DTPGH), and 165 to 168 (NKID).

It belongs to the TRAFAC class translation factor GTPase superfamily. Classic translation factor GTPase family. LepA subfamily.

It is found in the mitochondrion inner membrane. The enzyme catalyses GTP + H2O = GDP + phosphate + H(+). Functionally, promotes mitochondrial protein synthesis. May act as a fidelity factor of the translation reaction, by catalyzing a one-codon backward translocation of tRNAs on improperly translocated ribosomes. Binds to mitochondrial ribosomes in a GTP-dependent manner. This Debaryomyces hansenii (strain ATCC 36239 / CBS 767 / BCRC 21394 / JCM 1990 / NBRC 0083 / IGC 2968) (Yeast) protein is Translation factor GUF1, mitochondrial.